The primary structure comprises 412 residues: Hyaluronidase-3 (412 aa).

The first 22 residues, 1–22 (MITQLGLTLVVGLTLCLVHVQA), serve as a signal peptide directing secretion. 5 cysteine pairs are disulfide-bonded: Cys-42-Cys-332, Cys-206-Cys-221, Cys-357-Cys-368, Cys-362-Cys-396, and Cys-398-Cys-407. A glycan (N-linked (GlcNAc...) asparagine) is linked at Asn-69. Glu-129 (proton donor) is an active-site residue. An N-linked (GlcNAc...) asparagine glycan is attached at Asn-216. Residues 353–408 (AATACSHQRCHGHGRCSWKDPGQMEAFLHLQPDDNLGAWKSFRCRCYLGWSGPTCL) enclose the EGF-like domain.

This sequence belongs to the glycosyl hydrolase 56 family. In terms of processing, N-glycosylated.

It localises to the secreted. The protein localises to the cell membrane. It is found in the cytoplasmic vesicle. Its subcellular location is the secretory vesicle. The protein resides in the acrosome. It localises to the endoplasmic reticulum. The protein localises to the early endosome. It carries out the reaction Random hydrolysis of (1-&gt;4)-linkages between N-acetyl-beta-D-glucosamine and D-glucuronate residues in hyaluronate.. In terms of biological role, facilitates sperm penetration into the layer of cumulus cells surrounding the egg by digesting hyaluronic acid. Involved in induction of the acrosome reaction in the sperm. Involved in follicular atresia, the breakdown of immature ovarian follicles that are not selected to ovulate. Induces ovarian granulosa cell apoptosis, possibly via apoptotic signaling pathway involving CASP8 and CASP3 activation, and poly(ADP-ribose) polymerase (PARP) cleavage. Has no hyaluronidase activity in embryonic fibroblasts in vitro. Has no hyaluronidase activity in granulosa cells in vitro. The polypeptide is Hyaluronidase-3 (Hyal3) (Rattus norvegicus (Rat)).